Here is a 353-residue protein sequence, read N- to C-terminus: Uroporphyrinogen decarboxylase (353 aa).

Residues 35–39, Phe-54, Asp-84, Tyr-160, Ser-215, and His-329 contribute to the substrate site; that span reads RQAGR.

Belongs to the uroporphyrinogen decarboxylase family. As to quaternary structure, homodimer.

It localises to the cytoplasm. It carries out the reaction uroporphyrinogen III + 4 H(+) = coproporphyrinogen III + 4 CO2. It participates in porphyrin-containing compound metabolism; protoporphyrin-IX biosynthesis; coproporphyrinogen-III from 5-aminolevulinate: step 4/4. Its function is as follows. Catalyzes the decarboxylation of four acetate groups of uroporphyrinogen-III to yield coproporphyrinogen-III. The chain is Uroporphyrinogen decarboxylase from Staphylococcus epidermidis (strain ATCC 12228 / FDA PCI 1200).